A 379-amino-acid chain; its full sequence is 1-deoxy-D-xylulose 5-phosphate reductoisomerase (379 aa).

NADPH-binding residues include Thr-10, Gly-11, Ser-12, Ile-13, Arg-38, Asn-39, and Asn-121. Lys-122 is a binding site for 1-deoxy-D-xylulose 5-phosphate. Glu-123 provides a ligand contact to NADPH. Asp-147 lines the Mn(2+) pocket. Positions 148, 149, 173, and 196 each coordinate 1-deoxy-D-xylulose 5-phosphate. Glu-149 serves as a coordination point for Mn(2+). Gly-202 contacts NADPH. Ser-209, Asn-214, Lys-215, and Glu-218 together coordinate 1-deoxy-D-xylulose 5-phosphate. Glu-218 is a binding site for Mn(2+).

Belongs to the DXR family. Mg(2+) is required as a cofactor. The cofactor is Mn(2+).

It carries out the reaction 2-C-methyl-D-erythritol 4-phosphate + NADP(+) = 1-deoxy-D-xylulose 5-phosphate + NADPH + H(+). Its pathway is isoprenoid biosynthesis; isopentenyl diphosphate biosynthesis via DXP pathway; isopentenyl diphosphate from 1-deoxy-D-xylulose 5-phosphate: step 1/6. In terms of biological role, catalyzes the NADPH-dependent rearrangement and reduction of 1-deoxy-D-xylulose-5-phosphate (DXP) to 2-C-methyl-D-erythritol 4-phosphate (MEP). This is 1-deoxy-D-xylulose 5-phosphate reductoisomerase from Chlamydia trachomatis serovar L2 (strain ATCC VR-902B / DSM 19102 / 434/Bu).